Reading from the N-terminus, the 187-residue chain is Protein canopy-1 (187 aa).

Positions 1-24 are cleaved as a signal peptide; the sequence is MSPWIKHICLVLVAAFMLVKTTES. Residues 28 to 181 enclose the Saposin B-type domain; sequence EALYCSACMA…EVSDHCKSSV (154 aa). 3 disulfides stabilise this stretch: Cys32-Cys177, Cys35-Cys170, and Cys90-Cys143. Positions 184 to 187 match the Prevents secretion from ER motif; the sequence is HSEL.

Belongs to the canopy family. As to quaternary structure, homodimer. Interacts with fgfr1.

The protein resides in the endoplasmic reticulum. In terms of biological role, involved in the maintenance of the midbrain-hindbrain boundary (MHB) organizer. Contributes to a positive-feedback loop of FGF signaling in the MHB, enabling the MHB to exert its role as an organizer for the tectal and cerebellar development. In Danio rerio (Zebrafish), this protein is Protein canopy-1 (cnpy1).